A 215-amino-acid polypeptide reads, in one-letter code: Cytochrome b6 (215 aa).

The helical transmembrane segment at 32-52 threads the bilayer; that stretch reads IFYCLGGITLTCFLVQVATGF. Cys35 lines the heme c pocket. Heme b is bound by residues His86 and His100. 3 helical membrane-spanning segments follow: residues 90-110, 116-136, and 186-206; these read ASMM…TGGF, LTWV…VTGY, and LHTF…FLMI. His187 and His202 together coordinate heme b.

This sequence belongs to the cytochrome b family. PetB subfamily. In terms of assembly, the 4 large subunits of the cytochrome b6-f complex are cytochrome b6, subunit IV (17 kDa polypeptide, PetD), cytochrome f and the Rieske protein, while the 4 small subunits are PetG, PetL, PetM and PetN. The complex functions as a dimer. It depends on heme b as a cofactor. Requires heme c as cofactor.

The protein localises to the plastid. Its subcellular location is the chloroplast thylakoid membrane. Functionally, component of the cytochrome b6-f complex, which mediates electron transfer between photosystem II (PSII) and photosystem I (PSI), cyclic electron flow around PSI, and state transitions. The protein is Cytochrome b6 of Pinus thunbergii (Japanese black pine).